The chain runs to 146 residues: Small nuclear ribonucleoprotein Sm D1 (146 aa).

The region spanning 2 to 101 (KLVNFLKKLR…IRQIILPDSL (100 aa)) is the Sm domain. Positions 118–146 (RSGQIANDPSKKRRRDFGAPANKRPRRGL) are disordered. Residues 128-144 (KKRRRDFGAPANKRPRR) carry the Nuclear localization signal motif.

The protein belongs to the snRNP core protein family. As to quaternary structure, component of the Sm core complex, present in spliceosomal snRNP U1, U2, U4/U6 and U5. The core complex contains SMB1, SMD1, SMD2, SMD3, SME1, SMX3 and SMX2 (Sm proteins B, D1, D2, D3, E, F and G, respectively), and is probably a heptameric ring structure. Belongs to the CWC complex (or CEF1-associated complex), a spliceosome sub-complex reminiscent of a late-stage spliceosome composed of the U2, U5 and U6 snRNAs and at least BUD13, BUD31, BRR2, CDC40, CEF1, CLF1, CUS1, CWC2, CWC15, CWC21, CWC22, CWC23, CWC24, CWC25, CWC27, ECM2, HSH155, IST3, ISY1, LEA1, MSL1, NTC20, PRP8, PRP9, PRP11, PRP19, PRP21, PRP22, PRP45, PRP46, SLU7, SMB1, SMD1, SMD2, SMD3, SMX2, SMX3, SNT309, SNU114, SPP2, SYF1, SYF2, RSE1 and YJU2. Component of the U4/U6-U5 tri-snRNP complex composed of the U4, U6 and U5 snRNAs and at least PRP3, PRP4, PRP6, PRP8, PRP18, PRP31, PRP38, SNU13, SNU23, SNU66, SNU114, SPP381, SMB1, SMD1, SMD2, SMD3, SMX2, SMX3, LSM2, LSM3, LSM4, LSM5, LSM6, LSM7, LSM8, BRR2 and DIB1.

The protein resides in the nucleus. It localises to the cytoplasm. Lays a role in pre-mRNA splicing as a core component of the spliceosomal U1, U2, U4 and U5 small nuclear ribonucleoproteins (snRNPs), the building blocks of the spliceosome. Also binds telomerase RNA and is required for its accumulation. This Saccharomyces cerevisiae (strain ATCC 204508 / S288c) (Baker's yeast) protein is Small nuclear ribonucleoprotein Sm D1 (SMD1).